Reading from the N-terminus, the 356-residue chain is Histidinol-phosphate aminotransferase (356 aa).

K214 carries the post-translational modification N6-(pyridoxal phosphate)lysine.

This sequence belongs to the class-II pyridoxal-phosphate-dependent aminotransferase family. Histidinol-phosphate aminotransferase subfamily. In terms of assembly, homodimer. Requires pyridoxal 5'-phosphate as cofactor.

It carries out the reaction L-histidinol phosphate + 2-oxoglutarate = 3-(imidazol-4-yl)-2-oxopropyl phosphate + L-glutamate. It participates in amino-acid biosynthesis; L-histidine biosynthesis; L-histidine from 5-phospho-alpha-D-ribose 1-diphosphate: step 7/9. The sequence is that of Histidinol-phosphate aminotransferase from Shigella flexneri serotype 5b (strain 8401).